Here is a 20-residue protein sequence, read N- to C-terminus: Photosystem II stability/assembly factor HCF136, chloroplastic (20 aa).

The protein belongs to the Ycf48 family.

The protein resides in the plastid. It localises to the chloroplast thylakoid lumen. Its function is as follows. Essential for photosystem II (PSII) biogenesis; required for assembly of an early intermediate in PSII assembly that includes D2 (psbD) and cytochrome b559. In Spinacia oleracea (Spinach), this protein is Photosystem II stability/assembly factor HCF136, chloroplastic.